Consider the following 530-residue polypeptide: Probable 1,4-beta-D-glucan cellobiohydrolase B (530 aa).

The signal sequence occupies residues 1-26 (MLASTFSYRMYKTALILAALLGSGQA). The segment at 27–461 (QQVGTSQAEV…SNIKVGPIGS (435 aa)) is catalytic. The active-site Nucleophile is the Glu-238. Glu-243 (proton donor) is an active-site residue. Asn-296 carries an N-linked (GlcNAc...) asparagine glycan. The segment at 462-492 (TFNSGGSNPGGGTTTTAKPTTTTTTAGSPGG) is disordered. The segment at 462–494 (TFNSGGSNPGGGTTTTAKPTTTTTTAGSPGGTG) is ser/Thr-rich linker. Positions 475 to 488 (TTTAKPTTTTTTAG) are enriched in low complexity. The 37-residue stretch at 494-530 (GVAQHYGQCGGNGWQGPTTCASPYTCQKLNDFYSQCL) folds into the CBM1 domain. 2 disulfides stabilise this stretch: Cys-502–Cys-519 and Cys-513–Cys-529.

It belongs to the glycosyl hydrolase 7 (cellulase C) family.

The protein localises to the secreted. The catalysed reaction is Hydrolysis of (1-&gt;4)-beta-D-glucosidic linkages in cellulose and cellotetraose, releasing cellobiose from the non-reducing ends of the chains.. In terms of biological role, the biological conversion of cellulose to glucose generally requires three types of hydrolytic enzymes: (1) Endoglucanases which cut internal beta-1,4-glucosidic bonds; (2) Exocellobiohydrolases that cut the disaccharide cellobiose from the non-reducing end of the cellulose polymer chain; (3) Beta-1,4-glucosidases which hydrolyze the cellobiose and other short cello-oligosaccharides to glucose. The sequence is that of Probable 1,4-beta-D-glucan cellobiohydrolase B (cbhB) from Neosartorya fischeri (strain ATCC 1020 / DSM 3700 / CBS 544.65 / FGSC A1164 / JCM 1740 / NRRL 181 / WB 181) (Aspergillus fischerianus).